We begin with the raw amino-acid sequence, 218 residues long: Probable nicotinate-nucleotide adenylyltransferase (218 aa).

This sequence belongs to the NadD family.

It catalyses the reaction nicotinate beta-D-ribonucleotide + ATP + H(+) = deamido-NAD(+) + diphosphate. The protein operates within cofactor biosynthesis; NAD(+) biosynthesis; deamido-NAD(+) from nicotinate D-ribonucleotide: step 1/1. Functionally, catalyzes the reversible adenylation of nicotinate mononucleotide (NaMN) to nicotinic acid adenine dinucleotide (NaAD). The polypeptide is Probable nicotinate-nucleotide adenylyltransferase (Corynebacterium glutamicum (strain ATCC 13032 / DSM 20300 / JCM 1318 / BCRC 11384 / CCUG 27702 / LMG 3730 / NBRC 12168 / NCIMB 10025 / NRRL B-2784 / 534)).